A 1377-amino-acid chain; its full sequence is ATP-dependent helicase/nuclease subunit A (1377 aa).

One can recognise a UvrD-like helicase ATP-binding domain in the interval threonine 4 to arginine 478. Alanine 25–threonine 32 is a binding site for ATP. The UvrD-like helicase C-terminal domain maps to phenylalanine 526–glycine 867. Positions phenylalanine 1036–aspartate 1065 are enriched in acidic residues. Residues phenylalanine 1036–aspartate 1072 are disordered.

This sequence belongs to the helicase family. AddA subfamily. In terms of assembly, heterodimer of AddA and AddB/RexB. The cofactor is Mg(2+).

The enzyme catalyses Couples ATP hydrolysis with the unwinding of duplex DNA by translocating in the 3'-5' direction.. The catalysed reaction is ATP + H2O = ADP + phosphate + H(+). Its function is as follows. The heterodimer acts as both an ATP-dependent DNA helicase and an ATP-dependent, dual-direction single-stranded exonuclease. Recognizes the chi site generating a DNA molecule suitable for the initiation of homologous recombination. The AddA nuclease domain is required for chi fragment generation; this subunit has the helicase and 3' -&gt; 5' nuclease activities. This Lachnoclostridium phytofermentans (strain ATCC 700394 / DSM 18823 / ISDg) (Clostridium phytofermentans) protein is ATP-dependent helicase/nuclease subunit A.